A 364-amino-acid chain; its full sequence is Guanine nucleotide-binding protein alpha-6 subunit (364 aa).

The tract at residues 1–29 (MGAGATGLRGARLSPEERANSSKSRAIDR) is disordered. Gly2 carries N-myristoyl glycine lipidation. Residues 14 to 29 (SPEERANSSKSRAIDR) are compositionally biased toward basic and acidic residues. The 324-residue stretch at 40-363 (NRFKILLLGT…NENLRSAGLH (324 aa)) folds into the G-alpha domain. Positions 43-56 (KILLLGTAESGKST) are G1 motif. GTP contacts are provided by residues 48-55 (GTAESGKS), 186-192 (VHCRIST), 211-215 (DVGGQ), 280-283 (NKYD), and Ala335. 2 residues coordinate Mg(2+): Ser55 and Thr192. Residues 184–192 (DIVHCRIST) form a G2 motif region. Residues 207–216 (FKMVDVGGQR) form a G3 motif region. Residues 276–283 (VLFLNKYD) are G4 motif. The G5 motif stretch occupies residues 333 to 338 (TTATDT).

This sequence belongs to the G-alpha family. G proteins are composed of 3 units; alpha, beta and gamma. The alpha chain contains the guanine nucleotide binding site.

Its function is as follows. Guanine nucleotide-binding proteins (G proteins) are involved as modulators or transducers in various transmembrane signaling systems. This is Guanine nucleotide-binding protein alpha-6 subunit (gpa-6) from Caenorhabditis elegans.